The following is an 87-amino-acid chain: Acetolactate synthase isozyme 2 small subunit (87 aa).

The region spanning 5–78 (QVNVSARFNP…DVAHVAICQS (74 aa)) is the ACT domain.

As to quaternary structure, tetramer of two large and two small chains. Mg(2+) serves as cofactor. The cofactor is thiamine diphosphate.

The catalysed reaction is 2 pyruvate + H(+) = (2S)-2-acetolactate + CO2. It participates in amino-acid biosynthesis; L-isoleucine biosynthesis; L-isoleucine from 2-oxobutanoate: step 1/4. It functions in the pathway amino-acid biosynthesis; L-valine biosynthesis; L-valine from pyruvate: step 1/4. The chain is Acetolactate synthase isozyme 2 small subunit (ilvM) from Escherichia coli O6:H1 (strain CFT073 / ATCC 700928 / UPEC).